The sequence spans 811 residues: Mitochondrial intermediate peptidase (811 aa).

The transit peptide at 1–25 (MRSGSRLSNYLVRLSGRVSFTQKRS) directs the protein to the mitochondrion. The disordered stretch occupies residues 423–450 (TENGEKASTDTSTSTTTSTTTTDSTTTT). Over residues 431 to 450 (TDTSTSTTTSTTTTDSTTTT) the composition is skewed to low complexity. H593 is a binding site for Zn(2+). Residue E594 is part of the active site. The Zn(2+) site is built by H597 and H600.

The protein belongs to the peptidase M3 family. The cofactor is Zn(2+).

Its subcellular location is the mitochondrion matrix. The enzyme catalyses Release of an N-terminal octapeptide as second stage of processing of some proteins imported into the mitochondrion.. In terms of biological role, cleaves proteins, imported into the mitochondrion, to their mature size. While most mitochondrial precursor proteins are processed to the mature form in one step by mitochondrial processing peptidase (MPP), the sequential cleavage by MIP of an octapeptide after initial processing by MPP is a required step for a subgroup of nuclear-encoded precursor proteins destined for the matrix or the inner membrane. The chain is Mitochondrial intermediate peptidase (OCT1) from Lodderomyces elongisporus (strain ATCC 11503 / CBS 2605 / JCM 1781 / NBRC 1676 / NRRL YB-4239) (Yeast).